A 306-amino-acid polypeptide reads, in one-letter code: Proteasome subunit beta (306 aa).

Positions 1–67 are cleaved as a propeptide — removed in mature form; by autocatalysis; the sequence is MTWPNRDQPA…GLPTDAVPHG (67 aa). T68 serves as the catalytic Nucleophile.

Belongs to the peptidase T1B family. In terms of assembly, the 20S proteasome core is composed of 14 alpha and 14 beta subunits that assemble into four stacked heptameric rings, resulting in a barrel-shaped structure. The two inner rings, each composed of seven catalytic beta subunits, are sandwiched by two outer rings, each composed of seven alpha subunits. The catalytic chamber with the active sites is on the inside of the barrel. Has a gated structure, the ends of the cylinder being occluded by the N-termini of the alpha-subunits. Is capped by the proteasome-associated ATPase, ARC.

The protein localises to the cytoplasm. It carries out the reaction Cleavage of peptide bonds with very broad specificity.. It participates in protein degradation; proteasomal Pup-dependent pathway. The formation of the proteasomal ATPase ARC-20S proteasome complex, likely via the docking of the C-termini of ARC into the intersubunit pockets in the alpha-rings, may trigger opening of the gate for substrate entry. Interconversion between the open-gate and close-gate conformations leads to a dynamic regulation of the 20S proteasome proteolysis activity. Functionally, component of the proteasome core, a large protease complex with broad specificity involved in protein degradation. The chain is Proteasome subunit beta from Mycolicibacterium vanbaalenii (strain DSM 7251 / JCM 13017 / BCRC 16820 / KCTC 9966 / NRRL B-24157 / PYR-1) (Mycobacterium vanbaalenii).